The primary structure comprises 125 residues: Small ribosomal subunit protein uS13 (125 aa).

It belongs to the universal ribosomal protein uS13 family. Part of the 30S ribosomal subunit. Forms a loose heterodimer with protein S19. Forms two bridges to the 50S subunit in the 70S ribosome.

In terms of biological role, located at the top of the head of the 30S subunit, it contacts several helices of the 16S rRNA. In the 70S ribosome it contacts the 23S rRNA (bridge B1a) and protein L5 of the 50S subunit (bridge B1b), connecting the 2 subunits; these bridges are implicated in subunit movement. Contacts the tRNAs in the A and P-sites. This Rickettsia prowazekii (strain Madrid E) protein is Small ribosomal subunit protein uS13.